Here is a 488-residue protein sequence, read N- to C-terminus: Patatin-like protein 7 (488 aa).

Positions 23–49 (QRGGDGATAASKSANDYNNNDSLLTDM) are disordered. Polar residues predominate over residues 32–47 (ASKSANDYNNNDSLLT). Residues 101-301 (LSIDGGGMRG…AMSNPTAAAI (201 aa)) enclose the PNPLA domain. The short motif at 105-110 (GGGMRG) is the GXGXXG element. Ser145 serves as the catalytic Nucleophile.

Belongs to the patatin family. Highly expressed in roots and at lower levels in leaves, stems, flowers and siliques.

It localises to the cell membrane. Functionally, possesses non-specific lipolytic acyl hydrolase (LAH) activity. Catalyzes the hydrolysis of the galactolipids monogalactosyldiacylglycerol (MGDG) and digalactosyldiacylglycerol (DGDG), and the phoshpolipids phosphatidylcholine (PC), phosphatidylethanolamine (PE), phosphatidylglycerol (PG), phosphatidic acid (PA), phosphatidylserine (PS). Favors the release of fatty acid at the sn-2 position for PC. Possesses acyl-CoA thioesterase activity. Negatively affects disease resistance to the necrotic fungal pathogen Botrytis cinerea and the avirulent bacteria Pseudomonas syringae by promoting cell death and reducing the efficiency of the hypersensitive response, respectively. However, PLP2 contributes to resistance to cucumber mosaic virus (CMV), an obligate parasite inducing hypersensitive response. May negatively regulate oxylipin production, possibly via participating in membrane repair that includes removal of oxidatively modified lipids. Enzymatic products of PLP2 may influence cellulose content and cell elongation. The polypeptide is Patatin-like protein 7 (PLP7) (Arabidopsis thaliana (Mouse-ear cress)).